The sequence spans 137 residues: Nucleoside diphosphate kinase (137 aa).

Positions 11, 59, 87, 93, 104, and 114 each coordinate ATP. The Pros-phosphohistidine intermediate role is filled by His-117.

This sequence belongs to the NDK family. In terms of assembly, homotetramer. Mg(2+) serves as cofactor.

It is found in the cytoplasm. It carries out the reaction a 2'-deoxyribonucleoside 5'-diphosphate + ATP = a 2'-deoxyribonucleoside 5'-triphosphate + ADP. It catalyses the reaction a ribonucleoside 5'-diphosphate + ATP = a ribonucleoside 5'-triphosphate + ADP. Its function is as follows. Major role in the synthesis of nucleoside triphosphates other than ATP. The ATP gamma phosphate is transferred to the NDP beta phosphate via a ping-pong mechanism, using a phosphorylated active-site intermediate. In Parafrankia sp. (strain EAN1pec), this protein is Nucleoside diphosphate kinase.